The following is a 169-amino-acid chain: Der GTPase-activating protein YihI (169 aa).

Disordered stretches follow at residues 1-99 (MKPS…QAEL) and 146-169 (SYDD…LRGN). Residues 10–19 (SKGHAKARRK) show a composition bias toward basic residues. The span at 20 to 30 (TREELDQEARD) shows a compositional bias: basic and acidic residues. The span at 31-40 (RKRQKKRRGH) shows a compositional bias: basic residues. Over residues 49–58 (GNTTSGSKGQ) the composition is skewed to polar residues. A compositionally biased stretch (acidic residues) spans 147-159 (YDDDEEEEEDEKQ). Residues 160-169 (EDMMRLLRGN) show a composition bias toward basic and acidic residues.

It belongs to the YihI family. Interacts with Der.

Functionally, a GTPase-activating protein (GAP) that modifies Der/EngA GTPase function. May play a role in ribosome biogenesis. This Escherichia coli O81 (strain ED1a) protein is Der GTPase-activating protein YihI.